The following is a 202-amino-acid chain: FMN-dependent NADH:quinone oxidoreductase (202 aa).

Residues S9 and 95 to 98 (MYNF) each bind FMN.

It belongs to the azoreductase type 1 family. As to quaternary structure, homodimer. Requires FMN as cofactor.

The catalysed reaction is 2 a quinone + NADH + H(+) = 2 a 1,4-benzosemiquinone + NAD(+). It catalyses the reaction N,N-dimethyl-1,4-phenylenediamine + anthranilate + 2 NAD(+) = 2-(4-dimethylaminophenyl)diazenylbenzoate + 2 NADH + 2 H(+). Functionally, quinone reductase that provides resistance to thiol-specific stress caused by electrophilic quinones. Its function is as follows. Also exhibits azoreductase activity. Catalyzes the reductive cleavage of the azo bond in aromatic azo compounds to the corresponding amines. This Chromobacterium violaceum (strain ATCC 12472 / DSM 30191 / JCM 1249 / CCUG 213 / NBRC 12614 / NCIMB 9131 / NCTC 9757 / MK) protein is FMN-dependent NADH:quinone oxidoreductase.